The chain runs to 247 residues: DNA repair protein RecO (247 aa).

The protein belongs to the RecO family.

In terms of biological role, involved in DNA repair and RecF pathway recombination. The chain is DNA repair protein RecO from Brucella abortus (strain 2308).